A 284-amino-acid chain; its full sequence is Pantothenate synthetase (284 aa).

30–37 (MGNLHDGH) contacts ATP. The Proton donor role is filled by H37. Q61 provides a ligand contact to (R)-pantoate. Q61 is a binding site for beta-alanine. 149 to 152 (GEKD) contacts ATP. Q155 serves as a coordination point for (R)-pantoate. Residues V178 and 186 to 189 (LSSR) contribute to the ATP site.

This sequence belongs to the pantothenate synthetase family. Homodimer.

It is found in the cytoplasm. The catalysed reaction is (R)-pantoate + beta-alanine + ATP = (R)-pantothenate + AMP + diphosphate + H(+). It functions in the pathway cofactor biosynthesis; (R)-pantothenate biosynthesis; (R)-pantothenate from (R)-pantoate and beta-alanine: step 1/1. Its function is as follows. Catalyzes the condensation of pantoate with beta-alanine in an ATP-dependent reaction via a pantoyl-adenylate intermediate. This chain is Pantothenate synthetase, found in Erwinia tasmaniensis (strain DSM 17950 / CFBP 7177 / CIP 109463 / NCPPB 4357 / Et1/99).